A 200-amino-acid chain; its full sequence is MRTSHMLEQLMEALRCLPGVGPKSAQRMAFHLLQRDRKGGLQLADALSHAMTEIGHCNECRTFTEEDVCHICNNPKRQENGLLCVVESPADIAAVEATGQFSGRYFVLMGHLSPLDGIGPSDIGLDVLDYRLRRGDIKEVILATNPTVEGEATAHYIAELCREHKVDASRIAHGVPVGGELELVDGTTLSHSLLGRHKLN.

The C4-type zinc-finger motif lies at 57 to 72; the sequence is CNECRTFTEEDVCHIC. A Toprim domain is found at 81–176; that stretch reads GLLCVVESPA…DASRIAHGVP (96 aa).

It belongs to the RecR family.

Functionally, may play a role in DNA repair. It seems to be involved in an RecBC-independent recombinational process of DNA repair. It may act with RecF and RecO. The sequence is that of Recombination protein RecR from Vibrio vulnificus (strain CMCP6).